Consider the following 950-residue polypeptide: 5'-3' exoribonuclease 2 (950 aa).

The segment at 262-278 adopts a CCHC-type zinc-finger fold; the sequence is PCGLCNQFGHEVKDCEG. At lysine 286 the chain carries N6-acetyllysine. Positions 408-508 are disordered; the sequence is KDDEDSFRRR…SDSEPEPEDN (101 aa). Over residues 416–426 the composition is skewed to basic residues; the sequence is RRQKEKRKRMK. Threonine 439 carries the phosphothreonine modification. Polar residues predominate over residues 445 to 458; the sequence is SRNSPGSQVASNPR. A phosphoserine mark is found at serine 448, serine 471, serine 473, serine 475, serine 482, serine 487, serine 499, serine 501, and serine 678. The segment covering 468–482 has biased composition (low complexity); that stretch reads NNSSPSISPNTSFTS. Arginine 824, arginine 847, and arginine 851 each carry asymmetric dimethylarginine; alternate. An omega-N-methylarginine; alternate mark is found at arginine 824, arginine 847, and arginine 851. Arginine 880 carries the asymmetric dimethylarginine modification. Asymmetric dimethylarginine; alternate is present on arginine 883. Arginine 883 bears the Omega-N-methylarginine; alternate mark. Arginine 895 carries the omega-N-methylarginine modification. Positions 911 to 950 are disordered; sequence MLAGPGGYPPRRDDRGGRQGYPREGRKYPLPPPSGRYNWN. Basic and acidic residues predominate over residues 920-937; that stretch reads PRRDDRGGRQGYPREGRK. An Asymmetric dimethylarginine; alternate modification is found at arginine 946. At arginine 946 the chain carries Omega-N-methylarginine; alternate.

This sequence belongs to the 5'-3' exonuclease family. XRN2/RAT1 subfamily. Interacts with POLR2A and SMN1/SMN2. Interacts with CDKN2AIP and NKRF. Interacts with CDKN2AIPNL; the interaction is direct. Interacts with TRIM71 (via NHL repeats) in an RNA-dependent manner. Interacts with DHX34; the interaction is RNA-independent. As to expression, expressed in the spleen, thymus, prostate, testis, ovary, small intestine, colon, peripheral blood leukocytes, heart, brain, placenta, lung, liver, skeletal muscle, kidney, and pancreas. Isoform 2 is expressed predominantly in peripheral blood leukocytes.

It localises to the nucleus. The protein localises to the nucleolus. Its function is as follows. Possesses 5'-&gt;3' exoribonuclease activity. May promote the termination of transcription by RNA polymerase II. During transcription termination, cleavage at the polyadenylation site liberates a 5' fragment which is subsequently processed to form the mature mRNA and a 3' fragment which remains attached to the elongating polymerase. The processive degradation of this 3' fragment by this protein may promote termination of transcription. Binds to RNA polymerase II (RNAp II) transcription termination R-loops formed by G-rich pause sites. This chain is 5'-3' exoribonuclease 2 (XRN2), found in Homo sapiens (Human).